Consider the following 162-residue polypeptide: Large ribosomal subunit protein uL10 (162 aa).

Belongs to the universal ribosomal protein uL10 family. In terms of assembly, part of the ribosomal stalk of the 50S ribosomal subunit. The N-terminus interacts with L11 and the large rRNA to form the base of the stalk. The C-terminus forms an elongated spine to which L12 dimers bind in a sequential fashion forming a multimeric L10(L12)X complex.

Its function is as follows. Forms part of the ribosomal stalk, playing a central role in the interaction of the ribosome with GTP-bound translation factors. In Phytoplasma mali (strain AT), this protein is Large ribosomal subunit protein uL10.